The primary structure comprises 727 residues: MVENKSSYELPDQKTLDMNKEWVQELEDIFYSYKKYDVNKVRVQQFLDRRSDFLVYDFYTSNLSMDAMQYFQAGVTQKDVGLSKDYILLMRKLYSMLTEPSKQFFQEQFVKEWQYHEIDYTPYFETLVPRFREKIARLLDEIVKNPEEVDDDVQEELRWHLLFSPVTTLLDIFTRCLKNFEITGFCLNVCLKVPQLFFDRPLKIYHTEYETDRVESLMALVFRRLIFNKRWVDTSDEEWSNLEQLARVICSGQEPSLMSAWPLLEVVLCELYTQNRTPMISVEVLSEIAVKIVENFDNLKYATSARTKPAENVLLTPSIICFLLNIIVDENVSNTVIENCKMILKAIGQNMEQPFDAEAKSYLTSKVLKEFPWTLEFAISTWFKALEVEKRRIPSAVYKAINAEMKETFDERTFDIEESETVDQSINEEDEERCSTLSSESSVKTAISIDHKSDTAVDNLEMNQLHLSPKPKASVEAVKSCKPAFVAVIFEEIPPETDQNISVFEDPTIEVLTEYLDCIITMGVFDISCADELMRHSSVTFESSEQLEKVMKTAFEENFEIANAGPQRIKEISGKILEVFGSTSSESDHDRIASSIIELIPTEEYEKTGPRWSHDIKKSEIIQPLVIPVEATLESWPPAEYRYVAPGIKESRDSARHERLLRQQLATTKSLEMAQLHRDLWAENEKNMEHWTRPASPCNSSFFAESSVKPTTSSAYGNSSNFSRYAD.

Positions 703 to 727 (FAESSVKPTTSSAYGNSSNFSRYAD) are disordered.

As to quaternary structure, may interact with deps-1 and prg-1.

It localises to the cytoplasmic granule. Functionally, plays a role in regulating deps-1 cluster formation in the germline. The protein is Protein edg-1 of Caenorhabditis elegans.